The sequence spans 82 residues: Immediate early response 3-interacting protein 1 (82 aa).

2 consecutive transmembrane segments (helical) span residues 2 to 22 and 62 to 82; these read AFTLYTLLQAALLCVNAVAVL and VMRVPLIIVNSVTIVLLLLFG.

It belongs to the YOS1 family.

It is found in the endoplasmic reticulum membrane. Its function is as follows. Regulator of endoplasmic reticulum secretion that acts as a key determinant of brain size. Required for secretion of extracellular matrix proteins. Required for correct brain development by depositing sufficient extracellular matrix proteins for tissue integrity and the proliferation of neural progenitors. Acts as a regulator of the unfolded protein response (UPR). This chain is Immediate early response 3-interacting protein 1, found in Xenopus laevis (African clawed frog).